The sequence spans 485 residues: D-alanine--D-alanyl carrier protein ligase (485 aa).

144-145 is a binding site for ATP; that stretch reads TS. Residue aspartate 189 coordinates D-alanine. 284–289 is a binding site for ATP; it reads NTYGPT. Valine 293 provides a ligand contact to D-alanine. ATP is bound by residues aspartate 365 and lysine 473. Residue lysine 473 participates in D-alanine binding.

The protein belongs to the ATP-dependent AMP-binding enzyme family. DltA subfamily.

The protein localises to the cytoplasm. The catalysed reaction is holo-[D-alanyl-carrier protein] + D-alanine + ATP = D-alanyl-[D-alanyl-carrier protein] + AMP + diphosphate. It participates in cell wall biogenesis; lipoteichoic acid biosynthesis. Catalyzes the first step in the D-alanylation of lipoteichoic acid (LTA), the activation of D-alanine and its transfer onto the D-alanyl carrier protein (Dcp) DltC. In an ATP-dependent two-step reaction, forms a high energy D-alanyl-AMP intermediate, followed by transfer of the D-alanyl residue as a thiol ester to the phosphopantheinyl prosthetic group of the Dcp. D-alanylation of LTA plays an important role in modulating the properties of the cell wall in Gram-positive bacteria, influencing the net charge of the cell wall. This Staphylococcus aureus (strain MRSA252) protein is D-alanine--D-alanyl carrier protein ligase.